Reading from the N-terminus, the 215-residue chain is Cytochrome b6 (215 aa).

Residues 32–52 traverse the membrane as a helical segment; sequence IFYCLGGITLTCFLIQFATGF. Cys35 lines the heme c pocket. Positions 86 and 100 each coordinate heme b. The next 3 membrane-spanning stretches (helical) occupy residues 90–110, 116–136, and 186–206; these read ASMMVLMMILHVFRVYLTGGF, LTWVSGVILAVITVSFGVTGY, and AHTFVLPWLIAVFMLFHFLMI. Heme b contacts are provided by His187 and His202.

Belongs to the cytochrome b family. PetB subfamily. In terms of assembly, the 4 large subunits of the cytochrome b6-f complex are cytochrome b6, subunit IV (17 kDa polypeptide, PetD), cytochrome f and the Rieske protein, while the 4 small subunits are PetG, PetL, PetM and PetN. The complex functions as a dimer. The cofactor is heme b. It depends on heme c as a cofactor.

It localises to the cellular thylakoid membrane. Component of the cytochrome b6-f complex, which mediates electron transfer between photosystem II (PSII) and photosystem I (PSI), cyclic electron flow around PSI, and state transitions. The sequence is that of Cytochrome b6 from Desmonostoc sp. (strain PCC 7906) (Nostoc sp. (strain PCC 7906)).